Reading from the N-terminus, the 185-residue chain is Photosystem I assembly protein Ycf4 (185 aa).

3 consecutive transmembrane segments (helical) span residues Phe22 to Ser42, Ile57 to Ser77, and Phe101 to Pro121.

Belongs to the Ycf4 family.

Its subcellular location is the plastid. It localises to the chloroplast thylakoid membrane. Its function is as follows. Seems to be required for the assembly of the photosystem I complex. This chain is Photosystem I assembly protein Ycf4, found in Gnetum parvifolium (Small-leaved jointfir).